The primary structure comprises 372 residues: 4-hydroxy-3-methylbut-2-en-1-yl diphosphate synthase (flavodoxin) (372 aa).

Residues C270, C273, C305, and E312 each coordinate [4Fe-4S] cluster.

The protein belongs to the IspG family. [4Fe-4S] cluster serves as cofactor.

The catalysed reaction is (2E)-4-hydroxy-3-methylbut-2-enyl diphosphate + oxidized [flavodoxin] + H2O + 2 H(+) = 2-C-methyl-D-erythritol 2,4-cyclic diphosphate + reduced [flavodoxin]. It functions in the pathway isoprenoid biosynthesis; isopentenyl diphosphate biosynthesis via DXP pathway; isopentenyl diphosphate from 1-deoxy-D-xylulose 5-phosphate: step 5/6. Converts 2C-methyl-D-erythritol 2,4-cyclodiphosphate (ME-2,4cPP) into 1-hydroxy-2-methyl-2-(E)-butenyl 4-diphosphate. This Aliivibrio salmonicida (strain LFI1238) (Vibrio salmonicida (strain LFI1238)) protein is 4-hydroxy-3-methylbut-2-en-1-yl diphosphate synthase (flavodoxin).